Consider the following 259-residue polypeptide: Thiazole synthase (259 aa).

Lysine 95 functions as the Schiff-base intermediate with DXP in the catalytic mechanism. Residues glycine 156, 182–183 (AG), and 204–205 (AS) contribute to the 1-deoxy-D-xylulose 5-phosphate site.

Belongs to the ThiG family. Homotetramer. Forms heterodimers with either ThiH or ThiS.

It localises to the cytoplasm. It catalyses the reaction [ThiS sulfur-carrier protein]-C-terminal-Gly-aminoethanethioate + 2-iminoacetate + 1-deoxy-D-xylulose 5-phosphate = [ThiS sulfur-carrier protein]-C-terminal Gly-Gly + 2-[(2R,5Z)-2-carboxy-4-methylthiazol-5(2H)-ylidene]ethyl phosphate + 2 H2O + H(+). The protein operates within cofactor biosynthesis; thiamine diphosphate biosynthesis. Its function is as follows. Catalyzes the rearrangement of 1-deoxy-D-xylulose 5-phosphate (DXP) to produce the thiazole phosphate moiety of thiamine. Sulfur is provided by the thiocarboxylate moiety of the carrier protein ThiS. In vitro, sulfur can be provided by H(2)S. This is Thiazole synthase from Corynebacterium aurimucosum (strain ATCC 700975 / DSM 44827 / CIP 107346 / CN-1) (Corynebacterium nigricans).